A 244-amino-acid polypeptide reads, in one-letter code: Ribonuclease PH (244 aa).

Phosphate-binding positions include Arg86 and 124–126 (GTR).

Belongs to the RNase PH family. Homohexameric ring arranged as a trimer of dimers.

The catalysed reaction is tRNA(n+1) + phosphate = tRNA(n) + a ribonucleoside 5'-diphosphate. In terms of biological role, phosphorolytic 3'-5' exoribonuclease that plays an important role in tRNA 3'-end maturation. Removes nucleotide residues following the 3'-CCA terminus of tRNAs; can also add nucleotides to the ends of RNA molecules by using nucleoside diphosphates as substrates, but this may not be physiologically important. Probably plays a role in initiation of 16S rRNA degradation (leading to ribosome degradation) during starvation. In Glaesserella parasuis serovar 5 (strain SH0165) (Haemophilus parasuis), this protein is Ribonuclease PH.